The sequence spans 378 residues: Putative glutamate--cysteine ligase 2 (378 aa).

The protein belongs to the glutamate--cysteine ligase type 2 family. YbdK subfamily.

It carries out the reaction L-cysteine + L-glutamate + ATP = gamma-L-glutamyl-L-cysteine + ADP + phosphate + H(+). Its function is as follows. ATP-dependent carboxylate-amine ligase which exhibits weak glutamate--cysteine ligase activity. The protein is Putative glutamate--cysteine ligase 2 of Ectopseudomonas mendocina (strain ymp) (Pseudomonas mendocina).